Here is a 2587-residue protein sequence, read N- to C-terminus: MPSESYPRVNPKVFLFGPQALAFDAKLFTTLQSHLYDSWALDALSDLPIIWESLVKQVPKLQHVEGERLLRELHQGLQTGSLPDSLFPLPNILLSPLVVIVQLTQYLAFVRSGLPGLGDTDEIPQSVMQTSESLGLCTGILSAFAVSCASSIAKVQQYGAVAVRLSMLVGALVDAEEASPDTGSPAMSFSMSWNALESRTSVDEVLAEFPEAYISVFVDEKRATVTAPKESAPALLDKLRLSGAHVTEVALSGRFHWPKHREDAKQLIAFCDHDPRFQFPDASEIVLPTRLSTGGRLHEIALQEILLKPSEWLSLFGLVQSSHIDAGGANFVCFGSERCVPPTMIRKLGPLLIHISDVDLSTSALPSELLRSTSASPFDNLPDDQIAVIGMACHVPGAEDLDEYWRILTSGQSQHTRVPLERFSMKTAFRELEENRKWYGNFLRDYDTFDHKFFKKSAREMSSADPQHRLVLKLAYQAIEQSGYFGASHNSKHVGCYIGIGNNDYERNIACHPANAYSATGNLRSFAAGKVSHYFGWTGPSLTIDTACSSSGVAIHQACRAILHGECTSALAGGVNVLTSPEWFQNLAGASFLSPTGQCKPFDARGDGYCRGEGAGVVFLKRLSSAIADGDQVLGVIASTKVYQNQNCTAITVPNSISLAGLFGDVVEQARLEPQAISVVEAHGTGTPVGDPAEYDAVRRVFGGSIRSDTLSLMSVKGLLGHTEFASGIVSLVKILLMINEGFIPPQASFTSMSPALNAYHEDMINIATQLTPWNVDFRAALINNYGASGSNASMIITQAPKPRSSTSNPSPLSSSATSFPFWLCGIDSQSLRAYATKFRRFIHDNADSVKDLTVRNLSFQISRQSNRNLPRALIFSAASRNELEEKLLDYEQGGRSIAEIEVPPPRPVILCFGGQISTYVGLGKDVYNQATILRSHLDQCNTVCLSLGLGSIYPAIFQRSPILDTVELQTVLFAAQYSCARAWIDSGVKVTAVIGHSFGELTALCIAGAYSLADALRLISGRARLIRDKWGSDKGSMLALEADLAEVTALLSTSNKPDVSIACYNGPRSFTLAGSTESVQFIEELARSNQTFFGMKLKKLNVTNAFHSANVDPLISDLEALGREIQFNEPIIQVEAATETRSSPTRGSHFIAQHLRNPVYFNHAVQRLAEEYPAAIWLEAGSNSTITTMISRALGNSSSPHHFQSVHITSEESLPLLAEATTKLWKEGLNVSFWAHHPMEVSQHSLVILPPYQFEKARHWMDLKEVPEVKSSIDTTVQPPEPPKGLTTFIGFEDQAKQSARFRVNTTCDKFQQLTSANVALNTTAVTPGMLQIEISLDAIMNLQPDFKTYQFQPEVQGVSYHNALIDSNSTDLYLDAIAKDDGGLAWRWRLYGTDLGDRVTEFSSGSIVFLPASDPALKENFERLSRLSGKKRCASLLQGNGADDVLQGRNIYRAFEQVVNYAEPFRRVTKIAGKEDESAGYVSKAYTGETWMDPVLTECFCQVAGIFINLMTDASDLSKRGVYICDGISRWMHYPGLGSMTSAPDAWEVFAVHHHESETKYVSDVFAFDPRDGSLIEAILGISYRLVPMDSMRKLLTRGPQQESHFSTAAVSSKSTPVHAPTPTTTVSSTPSSLNSFQEKTIVKNVAKPPGPDISAKMCEIICNLSGLEPEEIEDDSDLVELGIDSLMAMELVREVDSAFKCTLQNDQLMELTDFASLVSCIRSTLGFDDEESGVGFERDSSVDTEAYILLEPNEPATNINGANGTVSFDHRDGNAVLSMSTLLDAFREIKWDTDDDIVKGQLGTYSKHVMPRSTELCIVYIVDAFEQLGCPIRSAAPGQVLTRVPYHPKHEKFMNMIIYGLLEKDARLIDINGSIITRTAVAPPTASADTLLSKLLHDEPVHAAEHKLAALIGQKFADLITDKEDGLKLIFGNPESREIAADMYSNSPVNTVWIKQLERFFERVLGRLPKDGQPICILEVGGGTGGTTSRIVPLLAKLGVPVKYTMTDISGSLIAAARKRFKKYPFMDFKPLNMESEPDAKFLQSQHIILATNCIHATRNLSVSLKNLHRILRPDGALIMLEMTEQVPWCDFIFGLLEGWWLFEDGRDYVLQPATYWEKVLQSVGYGHVDWTEGELPEARIQRLIIAHASGSRYDRGPKPPLASIPELTLPDISERRARIDAAVHKYTKDFVAPSQILSPAKLPSLSSGQCVLVTGATGSLGAHIVASLVQRPGIHTVVCLNRLSTTEATVRQQNSLQMRGISLDPTSLSKLKVIETDTSKPNLGLSPENYQYLIQNVTEIVHSAWPMSLTRPMRTYEPQFKIARGLIDLAREVAQHRPAPFKFGFQFISSSAVIANYPLLAGTPVVPEQSGTVESVPLTGYAEAKLATERILAETLYRFPDRFHVMAVRIAQITGSTSNGYWNPSEYMPFLIKSSQVLKILPELDGTLSWYPVNDVASVLGELLLSQSTTDLIYHIDNPSRQTWREMIAILARALDLGQKSIVPFGQWVNRVRGFRGSIADNPALQLIDFFEHYFVPMSCGGLVLDTTKSSQHSKTLQNQGPIDEDLMMKYIARWKESGFLNP.

The interval 93-256 is N-terminal acylcarrier protein transacylase domain (SAT); that stretch reads LLSPLVVIVQ…TEVALSGRFH (164 aa). C137 acts as the Nucleophile; for transacylase activity in catalysis. H256 functions as the Proton donor/acceptor; for transacylase activity in the catalytic mechanism. One can recognise a Ketosynthase family 3 (KS3) domain in the interval 383 to 799; sequence DDQIAVIGMA…GSNASMIITQ (417 aa). Catalysis depends on for beta-ketoacyl synthase activity residues C548, H683, and H722. Residues 912-1222 form a malonyl-CoA:ACP transacylase (MAT) domain region; sequence CFGGQISTYV…ESLPLLAEAT (311 aa). Residues 1284–1416 form an N-terminal hotdog fold region; that stretch reads PKGLTTFIGF…GSIVFLPASD (133 aa). In terms of domain architecture, PKS/mFAS DH spans 1284–1595; sequence PKGLTTFIGF…YRLVPMDSMR (312 aa). Residues 1315 to 1593 are product template (PT) domain; sequence LTSANVALNT…ISYRLVPMDS (279 aa). A C-terminal hotdog fold region spans residues 1436-1595; sequence ASLLQGNGAD…YRLVPMDSMR (160 aa). The disordered stretch occupies residues 1609–1635; that stretch reads STAAVSSKSTPVHAPTPTTTVSSTPSS. Residues 1617 to 1635 show a composition bias toward low complexity; the sequence is STPVHAPTPTTTVSSTPSS. Residues 1654–1728 enclose the Carrier domain; the sequence is PDISAKMCEI…SLVSCIRSTL (75 aa). S1688 is modified (O-(pantetheine 4'-phosphoryl)serine). Residues Y1947, H2059, and E2085 each act as for methyltransferase activity in the active site. The segment at 1952–2126 is methyltransferase (CMeT) domain; it reads VNTVWIKQLE…ATYWEKVLQS (175 aa). Residues 2208 to 2452 are NADPH-binding (R) domain; sequence SLSSGQCVLV…KILPELDGTL (245 aa).

Pantetheine 4'-phosphate is required as a cofactor.

It carries out the reaction 3 malonyl-CoA + acetyl-CoA + AH2 + 2 S-adenosyl-L-methionine + H(+) = clavatol + A + 2 S-adenosyl-L-homocysteine + 3 CO2 + 4 CoA + H2O. The protein operates within secondary metabolite biosynthesis. Non-reducing polyketide synthase; part of the cla gene cluster that produces clavatol and ortho-quinone methide. The clavatol biosynthesis cluster cla and the terrestric acid cluster tra are both involved in the production of peniphenones and penilactones. The non-reducing PKS claF is responsible for the formation of clavatol from successive condensations of 3 malonyl-CoA units, presumably with a simple acetyl-CoA starter unit, and 2 methylation steps. The esterase claE probably collaborates with claF by catalyzing the hydrolysis of ACP-bound acyl intermediates to free the ACP from stalled intermediates. The clavatol oxidase claD then converts clavatol to hydroxyclavatol. Spontaneous dehydration of hydroxyclavatol leads to the accumulation of the highly active ortho-quinone methide. On the other hand, the PKS-NRPS hybrid traA is involved in the formation of crustosic acid, with the help of traB and traD. The polyketide synthase module (PKS) of traA is responsible for the synthesis of the polyketide backbone via the condensation of an acetyl-CoA starter unit with 3 malonyl-CoA units. The downstream nonribosomal peptide synthetase (NRPS) module then amidates the carboxyl end of the polyketide with L-malic acid. Because traA lacks a designated enoylreductase (ER) domain, the required activity is provided the enoyl reductase traG. Crustosic acid undergoes decarboxylation and isomerization to the terrestric acid, catalyzed by the 2-oxoglutarate-dependent dioxygenase traH. Both acids are further converted to the 2 gamma-butyrolactones (R)-5-methyltetronic acid and (S)-5-carboxylmethyltetronic acid, with involvement of the cytochrome P450 monooxygenase claJ. Spontaneous addition of the methide to these gamma-butyrolactones leads to peniphenone D and penilactone D, which undergo again stereospecific attacking by methide to give penilactones A and B. This chain is Clavatol synthase claF, found in Penicillium crustosum (Blue mold fungus).